The primary structure comprises 249 residues: Fasciclin-like arabinogalactan protein 12 (249 aa).

The signal sequence occupies residues 1–24 (MEHSLIILLFTVLLLLTTTPGILS). Residues 37–181 (PTNVTKILEK…LAVYQVDKVL (145 aa)) form the FAS1 domain. N-linked (GlcNAc...) asparagine glycosylation is found at Asn39, Asn71, Asn143, Asn152, and Asn159. The disordered stretch occupies residues 186 to 219 (VFDPRPPAPAPAPSVSKSKKKKDDSDSSSDDSPA). Asp220 carries the GPI-anchor amidated aspartate lipid modification. A propeptide spans 221 to 249 (ASFALRNVGSVCDAVSFCVMSVMLAWFYL) (removed in mature form).

It belongs to the fasciclin-like AGP family.

The protein resides in the cell membrane. Its function is as follows. May be a cell surface adhesion protein. This chain is Fasciclin-like arabinogalactan protein 12 (FLA12), found in Arabidopsis thaliana (Mouse-ear cress).